Reading from the N-terminus, the 91-residue chain is Gene 76 protein (91 aa).

The segment at 58–81 (ELPSCDESPKGEARRDNDNRDGGK) is disordered.

This is Gene 76 protein (76) from Mycobacterium phage L5 (Mycobacteriophage L5).